Consider the following 363-residue polypeptide: 3-isopropylmalate dehydrogenase (363 aa).

78-91 provides a ligand contact to NAD(+); sequence GPKWEHLPPAEQPE. Arg-99, Arg-109, Arg-138, and Asp-227 together coordinate substrate. Mg(2+)-binding residues include Asp-227, Asp-251, and Asp-255. An NAD(+)-binding site is contributed by 285–297; sequence GSAPDIAGKGIAN.

It belongs to the isocitrate and isopropylmalate dehydrogenases family. LeuB type 1 subfamily. In terms of assembly, homodimer. Mg(2+) is required as a cofactor. The cofactor is Mn(2+).

It is found in the cytoplasm. It carries out the reaction (2R,3S)-3-isopropylmalate + NAD(+) = 4-methyl-2-oxopentanoate + CO2 + NADH. Its pathway is amino-acid biosynthesis; L-leucine biosynthesis; L-leucine from 3-methyl-2-oxobutanoate: step 3/4. Functionally, catalyzes the oxidation of 3-carboxy-2-hydroxy-4-methylpentanoate (3-isopropylmalate) to 3-carboxy-4-methyl-2-oxopentanoate. The product decarboxylates to 4-methyl-2 oxopentanoate. The protein is 3-isopropylmalate dehydrogenase of Photorhabdus laumondii subsp. laumondii (strain DSM 15139 / CIP 105565 / TT01) (Photorhabdus luminescens subsp. laumondii).